The chain runs to 334 residues: L-lactate dehydrogenase B chain (334 aa).

At Ala-2 the chain carries N-acetylalanine. At Lys-7 the chain carries N6-acetyllysine. Ser-44 carries the phosphoserine modification. NAD(+)-binding positions include 53-58 (DVLEDK) and Arg-100. An N6-acetyllysine modification is found at Lys-58. Arg-107 serves as a coordination point for substrate. An N6-acetyllysine modification is found at Lys-119. An NAD(+)-binding site is contributed by Asn-139. Positions 139 and 170 each coordinate substrate. The active-site Proton acceptor is His-194. Tyr-240 bears the Phosphotyrosine mark. Thr-249 is a binding site for substrate. An N6-acetyllysine modification is found at Lys-329.

This sequence belongs to the LDH/MDH superfamily. LDH family. Homotetramer. Interacts with PTEN upstream reading frame protein MP31; the interaction leads to inhibition of mitochondrial lactate dehydrogenase activity, preventing conversion of lactate to pyruvate in mitochondria.

It localises to the cytoplasm. Its subcellular location is the mitochondrion inner membrane. It catalyses the reaction (S)-lactate + NAD(+) = pyruvate + NADH + H(+). Its pathway is fermentation; pyruvate fermentation to lactate; (S)-lactate from pyruvate: step 1/1. In terms of biological role, interconverts simultaneously and stereospecifically pyruvate and lactate with concomitant interconversion of NADH and NAD(+). This chain is L-lactate dehydrogenase B chain (LDHB), found in Bos taurus (Bovine).